Consider the following 245-residue polypeptide: Enolase-phosphatase E1 (245 aa).

It belongs to the HAD-like hydrolase superfamily. MasA/MtnC family. As to quaternary structure, monomer. Mg(2+) is required as a cofactor.

It catalyses the reaction 5-methylsulfanyl-2,3-dioxopentyl phosphate + H2O = 1,2-dihydroxy-5-(methylsulfanyl)pent-1-en-3-one + phosphate. It participates in amino-acid biosynthesis; L-methionine biosynthesis via salvage pathway; L-methionine from S-methyl-5-thio-alpha-D-ribose 1-phosphate: step 3/6. Its pathway is amino-acid biosynthesis; L-methionine biosynthesis via salvage pathway; L-methionine from S-methyl-5-thio-alpha-D-ribose 1-phosphate: step 4/6. Functionally, bifunctional enzyme that catalyzes the enolization of 2,3-diketo-5-methylthiopentyl-1-phosphate (DK-MTP-1-P) into the intermediate 2-hydroxy-3-keto-5-methylthiopentenyl-1-phosphate (HK-MTPenyl-1-P), which is then dephosphorylated to form the acireductone 1,2-dihydroxy-3-keto-5-methylthiopentene (DHK-MTPene). This chain is Enolase-phosphatase E1, found in Prochlorococcus marinus (strain MIT 9313).